The chain runs to 944 residues: Protocadherin gamma-C5 (944 aa).

Positions 1–29 are cleaved as a signal peptide; sequence MGPKTLPQLAGKWQVLCMLSLCCWGWVSG. Cadherin domains follow at residues 30–133, 134–242, 243–350, 351–454, 455–564, and 571–677; these read QLRY…SPSF, ATPE…APTF, QSSV…APEV, LLAS…APRF, NQQL…APAV, and WEHS…MPKS. Topologically, residues 30–693 are extracellular; sequence QLRYSVVEES…PPERSDLTLY (664 aa). N-linked (GlcNAc...) asparagine glycosylation is found at Asn265, Asn443, and Asn547. Residues 694 to 714 traverse the membrane as a helical segment; it reads LIVALATVSLLSLVTFTFLSA. At 715–944 the chain is on the cytoplasmic side; sequence KCLQGNADGD…KKKSGKKEKK (230 aa). Disordered regions lie at residues 722–747, 812–853, and 914–944; these read DGDG…QSSP, SNTL…WPNN, and ATLT…KEKK. The segment covering 820 to 853 has biased composition (polar residues); it reads QQAPPNTDWRFSQAQRPGTSGSQNGDDTGTWPNN. Residues 934–944 are compositionally biased toward basic residues; that stretch reads NKKKSGKKEKK.

It is found in the cell membrane. Its function is as follows. Potential calcium-dependent cell-adhesion protein. May be involved in the establishment and maintenance of specific neuronal connections in the brain. In Pan troglodytes (Chimpanzee), this protein is Protocadherin gamma-C5 (PCDHGC5).